The following is a 477-amino-acid chain: Probable glycine dehydrogenase (decarboxylating) subunit 2 (477 aa).

An N6-(pyridoxal phosphate)lysine modification is found at Lys264.

It belongs to the GcvP family. C-terminal subunit subfamily. The glycine cleavage system is composed of four proteins: P, T, L and H. In this organism, the P 'protein' is a heterodimer of two subunits. Pyridoxal 5'-phosphate serves as cofactor.

It carries out the reaction N(6)-[(R)-lipoyl]-L-lysyl-[glycine-cleavage complex H protein] + glycine + H(+) = N(6)-[(R)-S(8)-aminomethyldihydrolipoyl]-L-lysyl-[glycine-cleavage complex H protein] + CO2. The glycine cleavage system catalyzes the degradation of glycine. The P protein binds the alpha-amino group of glycine through its pyridoxal phosphate cofactor; CO(2) is released and the remaining methylamine moiety is then transferred to the lipoamide cofactor of the H protein. This chain is Probable glycine dehydrogenase (decarboxylating) subunit 2, found in Fervidobacterium nodosum (strain ATCC 35602 / DSM 5306 / Rt17-B1).